Consider the following 541-residue polypeptide: Chaperonin GroEL (541 aa).

Residues 29-32 (TLGP), 86-90 (DGTTT), Gly413, 478-480 (NAA), and Asp494 each bind ATP.

The protein belongs to the chaperonin (HSP60) family. In terms of assembly, forms a cylinder of 14 subunits composed of two heptameric rings stacked back-to-back. Interacts with the co-chaperonin GroES.

Its subcellular location is the cytoplasm. It carries out the reaction ATP + H2O + a folded polypeptide = ADP + phosphate + an unfolded polypeptide.. In terms of biological role, together with its co-chaperonin GroES, plays an essential role in assisting protein folding. The GroEL-GroES system forms a nano-cage that allows encapsulation of the non-native substrate proteins and provides a physical environment optimized to promote and accelerate protein folding. The protein is Chaperonin GroEL of Agathobacter rectalis (strain ATCC 33656 / DSM 3377 / JCM 17463 / KCTC 5835 / VPI 0990) (Eubacterium rectale).